The sequence spans 494 residues: Rho GTPase-activating protein 19 (494 aa).

The residue at position 2 (Ala2) is an N-acetylalanine. 2 positions are modified to phosphoserine: Ser7 and Ser31. A Rho-GAP domain is found at 102–308 (MSLKRKEKGV…FMIKHSQKLF (207 aa)). The tract at residues 399-451 (QSLTQTPGREPSTPRVQKRARSRSFSGLIKRKVLGSQMTSEKKNSSPAPESVA) is disordered. Ser422, Ser438, and Ser470 each carry phosphoserine. Thr478 bears the Phosphothreonine mark.

Its function is as follows. GTPase activator for the Rho-type GTPases by converting them to an inactive GDP-bound state. The polypeptide is Rho GTPase-activating protein 19 (Arhgap19) (Mus musculus (Mouse)).